A 125-amino-acid polypeptide reads, in one-letter code: Fluoride-specific ion channel FluC (125 aa).

The next 4 helical transmembrane spans lie at 1-21, 32-52, 68-88, and 101-121; these read MIQA…RYFV, AFPW…GVFA, LLIT…LDAI, and IYIA…LAIM. The Na(+) site is built by glycine 75 and threonine 78.

The protein belongs to the fluoride channel Fluc/FEX (TC 1.A.43) family.

Its subcellular location is the cell inner membrane. The enzyme catalyses fluoride(in) = fluoride(out). Its activity is regulated as follows. Na(+) is not transported, but it plays an essential structural role and its presence is essential for fluoride channel function. Fluoride-specific ion channel. Important for reducing fluoride concentration in the cell, thus reducing its toxicity. This is Fluoride-specific ion channel FluC from Rhizobium etli (strain ATCC 51251 / DSM 11541 / JCM 21823 / NBRC 15573 / CFN 42).